Reading from the N-terminus, the 348-residue chain is Dihydroorotase (348 aa).

Residues His17 and His19 each contribute to the Zn(2+) site. Substrate contacts are provided by residues 19–21 and Asn45; that span reads HLR. 3 residues coordinate Zn(2+): Lys103, His140, and His178. Lys103 is modified (N6-carboxylysine). His140 is a substrate binding site. Substrate is bound at residue Leu223. Asp251 contributes to the Zn(2+) binding site. Asp251 is an active-site residue. Substrate is bound by residues His255 and Ala267.

This sequence belongs to the metallo-dependent hydrolases superfamily. DHOase family. Class II DHOase subfamily. In terms of assembly, homodimer. Zn(2+) serves as cofactor.

The catalysed reaction is (S)-dihydroorotate + H2O = N-carbamoyl-L-aspartate + H(+). Its pathway is pyrimidine metabolism; UMP biosynthesis via de novo pathway; (S)-dihydroorotate from bicarbonate: step 3/3. Its function is as follows. Catalyzes the reversible cyclization of carbamoyl aspartate to dihydroorotate. The polypeptide is Dihydroorotase (Shigella dysenteriae serotype 1 (strain Sd197)).